The following is a 918-amino-acid chain: MDYKETLLLPETNFPMRGNLPQNEPQRLKSWYEERKVYEKMKKNRQNAVKNFNIHDGPPYANGHLHIGHALNKILKDIITKTHYFYGENVRYVPGWDCHGLPIEQQVEVKLGDKKKELSKVEIRELCRQHAREFIDIQRDEFKTLGIIGDFENPYMTMKFEFEADIYKALCEIAKKGLLVERSKPVYWSWAARSALAEAEVEYEEKEDYSIYVAFELDGDALEKLGVKEASAVIWTTTPWTLPANQAISLKPDEIYVLTAENLIFAKPLLESVVQSGLSKGEIKKEFKSSLLENTHAINPLNGRKSKFLLGDHVMMDGGTGLVHTAPGHGEDDYYVCLKYGFSEILMPVDDGGCYDESIKHHGLFRSDVVDEFVGMHIFKANEKILELLGKSLLSVSKFRHSYPFCWRTHKPVIYRATKQWFIAMDESKLGGKTLRQTALKELEKVKFYPSVGIKRIGSMIENRPDWCISRQRDWGVPIAFFRDKATKEVIFDSEILDHIAGIFKEKGADAWWALSIDELLPKGSKYKAENLEKVMDILDVWFDSGSTWHAVLQSDNYDAGKYPASMYLEGSDQHRGWFQSSLLVSTAINSHAPYESILTHGFTVDAKGEKMSKSKGNVIAPQDVAKTHGVEILRLWVGMSDYSSDLKISEDILKQISEQYRKIRNTIRFLLANVNDLESLNTEFNILDKWILARAKKVFDEASACFKNYDFSKGFNILLNFLSADLSGVYLDVCKDRLYCDAKDAPRRRSAQSAMAIITKTLLPLIAPTLTYTVDEVMDYAPKIIKGEAKDAFDLVYEPIKFDLSFEDELLFASREKFNEIVDVLKKDKKIKSTLELSLETTNHNITSYDEREVADLYMVSSVRAYDDSEPLAEFELEGDKFKIIASNLHKCPRCWKFNASKEDALCPRCEEVISAK.

The 'HIGH' region motif lies at Pro59 to His69. Glu570 lines the L-isoleucyl-5'-AMP pocket. Residues Lys611 to Ser615 carry the 'KMSKS' region motif. ATP is bound at residue Lys614. Positions 893, 896, 908, and 911 each coordinate Zn(2+).

This sequence belongs to the class-I aminoacyl-tRNA synthetase family. IleS type 1 subfamily. In terms of assembly, monomer. Zn(2+) serves as cofactor.

The protein resides in the cytoplasm. It catalyses the reaction tRNA(Ile) + L-isoleucine + ATP = L-isoleucyl-tRNA(Ile) + AMP + diphosphate. Its function is as follows. Catalyzes the attachment of isoleucine to tRNA(Ile). As IleRS can inadvertently accommodate and process structurally similar amino acids such as valine, to avoid such errors it has two additional distinct tRNA(Ile)-dependent editing activities. One activity is designated as 'pretransfer' editing and involves the hydrolysis of activated Val-AMP. The other activity is designated 'posttransfer' editing and involves deacylation of mischarged Val-tRNA(Ile). The protein is Isoleucine--tRNA ligase of Campylobacter concisus (strain 13826).